A 61-amino-acid polypeptide reads, in one-letter code: Probable tautomerase BH3814 (61 aa).

Proline 2 serves as the catalytic Proton acceptor; via imino nitrogen.

Belongs to the 4-oxalocrotonate tautomerase family.

The polypeptide is Probable tautomerase BH3814 (Halalkalibacterium halodurans (strain ATCC BAA-125 / DSM 18197 / FERM 7344 / JCM 9153 / C-125) (Bacillus halodurans)).